Consider the following 60-residue polypeptide: UPF0434 protein KPK_3615 (60 aa).

This sequence belongs to the UPF0434 family.

This chain is UPF0434 protein KPK_3615, found in Klebsiella pneumoniae (strain 342).